Here is a 361-residue protein sequence, read N- to C-terminus: UDP-N-acetylglucosamine--N-acetylmuramyl-(pentapeptide) pyrophosphoryl-undecaprenol N-acetylglucosamine transferase (361 aa).

UDP-N-acetyl-alpha-D-glucosamine is bound by residues 13–15 (TGG), N125, R167, S196, I251, 270–275 (ALTVTE), and Q296.

Belongs to the glycosyltransferase 28 family. MurG subfamily.

The protein resides in the cell inner membrane. It catalyses the reaction di-trans,octa-cis-undecaprenyl diphospho-N-acetyl-alpha-D-muramoyl-L-alanyl-D-glutamyl-meso-2,6-diaminopimeloyl-D-alanyl-D-alanine + UDP-N-acetyl-alpha-D-glucosamine = di-trans,octa-cis-undecaprenyl diphospho-[N-acetyl-alpha-D-glucosaminyl-(1-&gt;4)]-N-acetyl-alpha-D-muramoyl-L-alanyl-D-glutamyl-meso-2,6-diaminopimeloyl-D-alanyl-D-alanine + UDP + H(+). It participates in cell wall biogenesis; peptidoglycan biosynthesis. Cell wall formation. Catalyzes the transfer of a GlcNAc subunit on undecaprenyl-pyrophosphoryl-MurNAc-pentapeptide (lipid intermediate I) to form undecaprenyl-pyrophosphoryl-MurNAc-(pentapeptide)GlcNAc (lipid intermediate II). The sequence is that of UDP-N-acetylglucosamine--N-acetylmuramyl-(pentapeptide) pyrophosphoryl-undecaprenol N-acetylglucosamine transferase from Psychrobacter cryohalolentis (strain ATCC BAA-1226 / DSM 17306 / VKM B-2378 / K5).